The primary structure comprises 67 residues: Large ribosomal subunit protein uL29 (67 aa).

This sequence belongs to the universal ribosomal protein uL29 family.

The polypeptide is Large ribosomal subunit protein uL29 (rpmC) (Thermus thermophilus).